The primary structure comprises 334 residues: Glycerol-3-phosphate dehydrogenase [NAD(P)+] (334 aa).

NADPH is bound by residues S14, Y15, H35, and K109. K109, G138, and T140 together coordinate sn-glycerol 3-phosphate. A142 contacts NADPH. Sn-glycerol 3-phosphate-binding residues include K194, D247, S257, R258, and N259. K194 (proton acceptor) is an active-site residue. An NADPH-binding site is contributed by R258. V282 and E284 together coordinate NADPH.

Belongs to the NAD-dependent glycerol-3-phosphate dehydrogenase family.

It localises to the cytoplasm. It catalyses the reaction sn-glycerol 3-phosphate + NAD(+) = dihydroxyacetone phosphate + NADH + H(+). It carries out the reaction sn-glycerol 3-phosphate + NADP(+) = dihydroxyacetone phosphate + NADPH + H(+). Its pathway is membrane lipid metabolism; glycerophospholipid metabolism. Catalyzes the reduction of the glycolytic intermediate dihydroxyacetone phosphate (DHAP) to sn-glycerol 3-phosphate (G3P), the key precursor for phospholipid synthesis. This Aeromonas salmonicida (strain A449) protein is Glycerol-3-phosphate dehydrogenase [NAD(P)+].